The sequence spans 343 residues: Cell cycle control protein 50C (343 aa).

The Cytoplasmic portion of the chain corresponds to 1-34; it reads MKRKCQDYESRLPDNTAVKQQQLPAFRLQLTASE. Residues 35–55 form a helical membrane-spanning segment; the sequence is ILSGFFAIGLFCLGMGIILLL. The Extracellular portion of the chain corresponds to 56-306; that stretch reads SAKSIKEVEI…STLTWSGGSS (251 aa). N-linked (GlcNAc...) asparagine glycosylation is found at N66, N164, N205, and N265. A helical membrane pass occupies residues 307–327; sequence LFLALAYLVTGAVTLLASFSM. The Cytoplasmic segment spans residues 328–343; that stretch reads MALHLKLKERKTFFLQ.

The protein belongs to the CDC50/LEM3 family.

It is found in the membrane. The chain is Cell cycle control protein 50C (TMEM30C) from Bos taurus (Bovine).